Consider the following 557-residue polypeptide: 2-isopropylmalate synthase (557 aa).

The region spanning 31–304 (PTWCSVDLRD…DPGLNFASML (274 aa)) is the Pyruvate carboxyltransferase domain. Mg(2+) contacts are provided by Asp-40, His-243, His-245, and Asn-279. The regulatory domain stretch occupies residues 439–557 (IENPIKFLNF…NTMIKDSAAV (119 aa)).

The protein belongs to the alpha-IPM synthase/homocitrate synthase family. LeuA type 2 subfamily. Homodimer. Mg(2+) is required as a cofactor.

The protein localises to the cytoplasm. The catalysed reaction is 3-methyl-2-oxobutanoate + acetyl-CoA + H2O = (2S)-2-isopropylmalate + CoA + H(+). It functions in the pathway amino-acid biosynthesis; L-leucine biosynthesis; L-leucine from 3-methyl-2-oxobutanoate: step 1/4. In terms of biological role, catalyzes the condensation of the acetyl group of acetyl-CoA with 3-methyl-2-oxobutanoate (2-ketoisovalerate) to form 3-carboxy-3-hydroxy-4-methylpentanoate (2-isopropylmalate). In Desulfitobacterium hafniense (strain Y51), this protein is 2-isopropylmalate synthase.